Reading from the N-terminus, the 457-residue chain is Methylenetetrahydrofolate--tRNA-(uracil-5-)-methyltransferase TrmFO (457 aa).

12 to 17 (GGGLAG) contributes to the FAD binding site.

It belongs to the MnmG family. TrmFO subfamily. FAD is required as a cofactor.

It localises to the cytoplasm. It catalyses the reaction uridine(54) in tRNA + (6R)-5,10-methylene-5,6,7,8-tetrahydrofolate + NADH + H(+) = 5-methyluridine(54) in tRNA + (6S)-5,6,7,8-tetrahydrofolate + NAD(+). It carries out the reaction uridine(54) in tRNA + (6R)-5,10-methylene-5,6,7,8-tetrahydrofolate + NADPH + H(+) = 5-methyluridine(54) in tRNA + (6S)-5,6,7,8-tetrahydrofolate + NADP(+). Functionally, catalyzes the folate-dependent formation of 5-methyl-uridine at position 54 (M-5-U54) in all tRNAs. This Myxococcus xanthus (strain DK1622) protein is Methylenetetrahydrofolate--tRNA-(uracil-5-)-methyltransferase TrmFO.